The following is a 147-amino-acid chain: MKIIIQRVKKAQVSIEGQIQGKINQGLLLLVGVGPEDQEEDLDYAVRKLVNMRIFSDVEGKMNLSVKDIEGEILSISQFTLFADTKKGNRPAFTGAAKPDMASDFYDAFNQKLAQEVPVQTGIFGADMQVELVNNGPVTIILDTKKR.

Residues 136 to 137 (GP) carry the Gly-cisPro motif, important for rejection of L-amino acids motif.

It belongs to the DTD family. As to quaternary structure, homodimer.

Its subcellular location is the cytoplasm. The catalysed reaction is glycyl-tRNA(Ala) + H2O = tRNA(Ala) + glycine + H(+). It catalyses the reaction a D-aminoacyl-tRNA + H2O = a tRNA + a D-alpha-amino acid + H(+). An aminoacyl-tRNA editing enzyme that deacylates mischarged D-aminoacyl-tRNAs. Also deacylates mischarged glycyl-tRNA(Ala), protecting cells against glycine mischarging by AlaRS. Acts via tRNA-based rather than protein-based catalysis; rejects L-amino acids rather than detecting D-amino acids in the active site. By recycling D-aminoacyl-tRNA to D-amino acids and free tRNA molecules, this enzyme counteracts the toxicity associated with the formation of D-aminoacyl-tRNA entities in vivo and helps enforce protein L-homochirality. The chain is D-aminoacyl-tRNA deacylase from Streptococcus pneumoniae (strain Taiwan19F-14).